We begin with the raw amino-acid sequence, 308 residues long: Acetylglutamate kinase (308 aa).

Substrate contacts are provided by residues Gly-86 to Gly-87, Arg-108, and Asn-201.

The protein belongs to the acetylglutamate kinase family. ArgB subfamily.

The protein localises to the cytoplasm. The catalysed reaction is N-acetyl-L-glutamate + ATP = N-acetyl-L-glutamyl 5-phosphate + ADP. The protein operates within amino-acid biosynthesis; L-arginine biosynthesis; N(2)-acetyl-L-ornithine from L-glutamate: step 2/4. Functionally, catalyzes the ATP-dependent phosphorylation of N-acetyl-L-glutamate. The protein is Acetylglutamate kinase of Prochlorococcus marinus (strain MIT 9303).